Reading from the N-terminus, the 178-residue chain is Outer envelope pore protein 16-2, chloroplastic (178 aa).

Positions 1-102 are contains beta strands; that stretch reads MEKSGGRIVM…DALVKNTGKE (102 aa). A helical membrane pass occupies residues 103–119; that stretch reads SLQWGLAAGLYSGITYG.

Belongs to the Tim17/Tim22/Tim23 family. Plastid outer envelope porin OEP16 (TC 1.B.30) subfamily. In terms of assembly, homodimer and oligomers in membrane. Detected in pollen and seeds. Present in leaves and cotyledons.

It is found in the plastid. It localises to the chloroplast outer membrane. Its function is as follows. Voltage-dependent high-conductance channel with a slight cation-selectivity; selective for amino acids but excludes triosephosphates or uncharged sugars. Non-essential amino acid-selective channel protein and translocation pore for NADPH:protochlorophyllide oxidoreductase A (PORA) and possibly PORB. This chain is Outer envelope pore protein 16-2, chloroplastic (OEP162), found in Arabidopsis thaliana (Mouse-ear cress).